Here is an 842-residue protein sequence, read N- to C-terminus: Translation initiation factor IF-2 (842 aa).

Disordered stretches follow at residues 42–91 and 139–253; these read ETKR…NLSS and LQKQ…NQEP. 2 stretches are compositionally biased toward basic and acidic residues: residues 176-190 and 199-214; these read IEKR…EERH and SEIR…DERR. A tr-type G domain is found at 340 to 509; that stretch reads PRPPVVTIMG…LLQAEMLDLK (170 aa). The tract at residues 349-356 is G1; that stretch reads GHVDHGKT. 349 to 356 lines the GTP pocket; sequence GHVDHGKT. Residues 374–378 are G2; that stretch reads GITQH. The segment at 395–398 is G3; the sequence is DTPG. Residues 395–399 and 449–452 contribute to the GTP site; these read DTPGH and NKID. Residues 449-452 are G4; that stretch reads NKID. Residues 485–487 form a G5 region; sequence SAK.

The protein belongs to the TRAFAC class translation factor GTPase superfamily. Classic translation factor GTPase family. IF-2 subfamily.

The protein localises to the cytoplasm. Functionally, one of the essential components for the initiation of protein synthesis. Protects formylmethionyl-tRNA from spontaneous hydrolysis and promotes its binding to the 30S ribosomal subunits. Also involved in the hydrolysis of GTP during the formation of the 70S ribosomal complex. The protein is Translation initiation factor IF-2 of Bartonella tribocorum (strain CIP 105476 / IBS 506).